Consider the following 53-residue polypeptide: MPQMAPIGWLSLFIIFSLTFILFSMMNYYSTIPQSPKSQILKKSQTNSMNWKW.

A helical transmembrane segment spans residues Pro6–Met26.

The protein belongs to the ATPase protein 8 family. In terms of assembly, F-type ATPases have 2 components, CF(1) - the catalytic core - and CF(0) - the membrane proton channel.

It is found in the mitochondrion membrane. In terms of biological role, mitochondrial membrane ATP synthase (F(1)F(0) ATP synthase or Complex V) produces ATP from ADP in the presence of a proton gradient across the membrane which is generated by electron transport complexes of the respiratory chain. F-type ATPases consist of two structural domains, F(1) - containing the extramembraneous catalytic core and F(0) - containing the membrane proton channel, linked together by a central stalk and a peripheral stalk. During catalysis, ATP synthesis in the catalytic domain of F(1) is coupled via a rotary mechanism of the central stalk subunits to proton translocation. Part of the complex F(0) domain. Minor subunit located with subunit a in the membrane. This Ceratitis capitata (Mediterranean fruit fly) protein is ATP synthase protein 8 (mt:ATPase8).